The sequence spans 231 residues: Killer cell lectin-like receptor subfamily F member 1 (231 aa).

The Cytoplasmic segment spans residues 1 to 38 (MQDEERYMTLNVQSKKRTSTQTTQLTFKDYSVVLHWYK). A Phosphotyrosine modification is found at Tyr7. A helical; Signal-anchor for type II membrane protein membrane pass occupies residues 39–59 (ILLGISGTLNGILALALISLI). At 60-231 (LLVSQGVLLK…SSVFKWICQY (172 aa)) the chain is on the extracellular side. Asn77, Asn91, Asn96, and Asn176 each carry an N-linked (GlcNAc...) asparagine glycan. The C-type lectin domain maps to 121–230 (YRGKCYWFSN…CSSVFKWICQ (110 aa)). 2 cysteine pairs are disulfide-bonded: Cys142–Cys229 and Cys208–Cys221.

In terms of assembly, homodimer. Interacts with CLEC2B. Phosphorylated on Tyr-7; this phosphorylation is required for NKp80/KLRF1-mediated cytotoxicity.

The protein localises to the membrane. Its function is as follows. Functions as an activating receptor involved in immunosurveillance upon binding to various ligands displayed at the surface of myeloid cells. Upon interaction with CLEC2B ligand, stimulates NK-cell cytotoxicity and cytokine production leading to the cytolysis of malignant CLEC2B-expressing myeloid cells. Actviation of the common cytotoxicity pathway involves SRC and SYK kinases. The sequence is that of Killer cell lectin-like receptor subfamily F member 1 (KLRF1) from Macaca fascicularis (Crab-eating macaque).